The chain runs to 602 residues: uncharacterized protein (602 aa).

N-linked (GlcNAc...) asparagine glycans are attached at residues Asn-305, Asn-497, and Asn-577.

In terms of processing, N-glycosylated.

The protein resides in the vacuole. This is an uncharacterized protein from Saccharomyces cerevisiae (strain ATCC 204508 / S288c) (Baker's yeast).